Here is a 335-residue protein sequence, read N- to C-terminus: Tryptophan--tRNA ligase (335 aa).

Residues 19-21 (QPS) and 28-29 (GN) each bind ATP. Residues 20–29 (PSSGMLHLGN) carry the 'HIGH' region motif. Asp-143 contacts L-tryptophan. Residues 155–157 (GAD), Ile-192, and 201–205 (KMSKS) contribute to the ATP site. The 'KMSKS' region signature appears at 201-205 (KMSKS).

Belongs to the class-I aminoacyl-tRNA synthetase family. Homodimer.

It localises to the cytoplasm. It catalyses the reaction tRNA(Trp) + L-tryptophan + ATP = L-tryptophyl-tRNA(Trp) + AMP + diphosphate + H(+). Catalyzes the attachment of tryptophan to tRNA(Trp). This is Tryptophan--tRNA ligase from Tropheryma whipplei (strain TW08/27) (Whipple's bacillus).